The following is a 370-amino-acid chain: D-aspartate oxidase (370 aa).

FAD contacts are provided by isoleucine 15, alanine 49, serine 50, glycine 54, valine 166, arginine 317, glycine 346, and glutamine 348. The Microbody targeting signal motif lies at 368-370 (ARL).

Belongs to the DAMOX/DASOX family. In terms of assembly, homotetramer. Requires FAD as cofactor.

It is found in the peroxisome matrix. It carries out the reaction D-aspartate + O2 + H2O = oxaloacetate + H2O2 + NH4(+). The catalysed reaction is D-glutamate + O2 + H2O = H2O2 + 2-oxoglutarate + NH4(+). Inhibited by malonate and D-malate. Very mildly inhibited by benzoate, ethylenediaminetetraacetic acid (EDTA), crotonate and anthranilate. May be very mildly inhibited by meso-tartrate. Selectively catalyzes the oxidative deamination of acidic amino acids. Protects the organism from the toxicity of D-amino acids. Enables the organism to utilize D-amino acids as a source of nutrients. Enables the organism to utilize D-aspartate as a source of nitrogen and carbon. This Vanrija humicola (Yeast) protein is D-aspartate oxidase.